The sequence spans 147 residues: Cyanate hydratase (147 aa).

Active-site residues include arginine 88, glutamate 91, and serine 114.

It belongs to the cyanase family.

It carries out the reaction cyanate + hydrogencarbonate + 3 H(+) = NH4(+) + 2 CO2. Its function is as follows. Catalyzes the reaction of cyanate with bicarbonate to produce ammonia and carbon dioxide. In Methylobacillus flagellatus (strain ATCC 51484 / DSM 6875 / VKM B-1610 / KT), this protein is Cyanate hydratase.